The following is a 225-amino-acid chain: Orotate phosphoribosyltransferase (225 aa).

Lys32 is a binding site for 5-phospho-alpha-D-ribose 1-diphosphate. 40 to 41 is a binding site for orotate; the sequence is FF. 5-phospho-alpha-D-ribose 1-diphosphate-binding positions include 78-79, Arg104, Lys105, Lys108, His110, and 129-137; these read YK and DDVISAGTS. Orotate-binding residues include Ser133 and Arg161.

Belongs to the purine/pyrimidine phosphoribosyltransferase family. PyrE subfamily. In terms of assembly, homodimer. It depends on Mg(2+) as a cofactor.

The enzyme catalyses orotidine 5'-phosphate + diphosphate = orotate + 5-phospho-alpha-D-ribose 1-diphosphate. It functions in the pathway pyrimidine metabolism; UMP biosynthesis via de novo pathway; UMP from orotate: step 1/2. Its function is as follows. Catalyzes the transfer of a ribosyl phosphate group from 5-phosphoribose 1-diphosphate to orotate, leading to the formation of orotidine monophosphate (OMP). The protein is Orotate phosphoribosyltransferase of Cupriavidus metallidurans (strain ATCC 43123 / DSM 2839 / NBRC 102507 / CH34) (Ralstonia metallidurans).